Reading from the N-terminus, the 1079-residue chain is BRD4-interacting chromatin-remodeling complex-associated protein-like (1079 aa).

Disordered stretches follow at residues 51 to 79 and 509 to 604; these read NSSN…LPLS and LHLS…TPGT. A compositionally biased stretch (low complexity) spans 68–79; sequence LGEGPSDGLPLS. The segment covering 544–576 has biased composition (polar residues); that stretch reads SSASTAHPSLGSAVQSGSSGSNFTGDQLTQPNR. Low complexity predominate over residues 590–604; it reads SSSKSTSTFSNTPGT. Serine 623 bears the Phosphoserine mark. Disordered stretches follow at residues 669–691, 837–877, and 917–954; these read EKVV…GGQK, TQFG…NHDQ, and TSEE…TESK. Composition is skewed to basic and acidic residues over residues 918-928 and 938-952; these read SEEKASRREPL and EGHR…HGTE. Residue serine 980 is modified to Phosphoserine.

As to quaternary structure, component of the multiprotein chromatin-remodeling complexes SWI/SNF: SWI/SNF-A (BAF), SWI/SNF-B (PBAF) and related complexes. The canonical complex contains a catalytic subunit (either SMARCA4/BRG1/BAF190A or SMARCA2/BRM/BAF190B) and at least SMARCE1, ACTL6A/BAF53, SMARCC1/BAF155, SMARCC2/BAF170, and SMARCB1/SNF5/BAF47. Other subunits specific to each of the complexes may also be present permitting several possible combinations developmentally and tissue specific. Component of the SWI/SNF (GBAF) subcomplex, which includes at least BICRA or BICRAL (mutually exclusive), BRD9, SS18, the core BAF subunits, SMARCA2/BRM, SMARCA4/BRG1/BAF190A, ACTL6A/BAF53, SMARCC1/BAF155, and SMARCD1/BAF60A.

Its function is as follows. Component of SWI/SNF chromatin remodeling subcomplex GBAF that carries out key enzymatic activities, changing chromatin structure by altering DNA-histone contacts within a nucleosome in an ATP-dependent manner. The chain is BRD4-interacting chromatin-remodeling complex-associated protein-like from Homo sapiens (Human).